Consider the following 601-residue polypeptide: Translation initiation factor IF-2 (601 aa).

Positions Gly54 to Glu101 are disordered. Positions Ala57–Thr89 are enriched in low complexity. Residues His104–Arg273 enclose the tr-type G domain. Positions Gly113–Thr120 are G1. Gly113–Thr120 lines the GTP pocket. The interval Gly138–His142 is G2. The interval Asp159–Gly162 is G3. Residues Asp159–His163 and Asn213–Asp216 each bind GTP. Positions Asn213–Asp216 are G4. A G5 region spans residues Ser249–Lys251.

Belongs to the TRAFAC class translation factor GTPase superfamily. Classic translation factor GTPase family. IF-2 subfamily.

The protein localises to the cytoplasm. Functionally, one of the essential components for the initiation of protein synthesis. Protects formylmethionyl-tRNA from spontaneous hydrolysis and promotes its binding to the 30S ribosomal subunits. Also involved in the hydrolysis of GTP during the formation of the 70S ribosomal complex. In Deinococcus geothermalis (strain DSM 11300 / CIP 105573 / AG-3a), this protein is Translation initiation factor IF-2.